Reading from the N-terminus, the 447-residue chain is Na(+)-translocating NADH-quinone reductase subunit A (447 aa).

Belongs to the NqrA family. In terms of assembly, composed of six subunits; NqrA, NqrB, NqrC, NqrD, NqrE and NqrF.

The catalysed reaction is a ubiquinone + n Na(+)(in) + NADH + H(+) = a ubiquinol + n Na(+)(out) + NAD(+). Its function is as follows. NQR complex catalyzes the reduction of ubiquinone-1 to ubiquinol by two successive reactions, coupled with the transport of Na(+) ions from the cytoplasm to the periplasm. NqrA to NqrE are probably involved in the second step, the conversion of ubisemiquinone to ubiquinol. The chain is Na(+)-translocating NADH-quinone reductase subunit A from Tolumonas auensis (strain DSM 9187 / NBRC 110442 / TA 4).